The primary structure comprises 274 residues: 2,3,4,5-tetrahydropyridine-2,6-dicarboxylate N-succinyltransferase (274 aa).

The protein belongs to the transferase hexapeptide repeat family.

The protein resides in the cytoplasm. The catalysed reaction is (S)-2,3,4,5-tetrahydrodipicolinate + succinyl-CoA + H2O = (S)-2-succinylamino-6-oxoheptanedioate + CoA. Its pathway is amino-acid biosynthesis; L-lysine biosynthesis via DAP pathway; LL-2,6-diaminopimelate from (S)-tetrahydrodipicolinate (succinylase route): step 1/3. The polypeptide is 2,3,4,5-tetrahydropyridine-2,6-dicarboxylate N-succinyltransferase (Salmonella agona (strain SL483)).